Here is a 68-residue protein sequence, read N- to C-terminus: Medusin-AS (68 aa).

The N-terminal stretch at 1–22 (MAFLKKSLFLVLFLGLVSLSVC) is a signal peptide. Positions 23–49 (EEEKRESEEEKNEQEEDDRDERSEEKR) are excised as a propeptide. The segment at 24–46 (EEKRESEEEKNEQEEDDRDERSE) is disordered. A compositionally biased stretch (acidic residues) spans 31–41 (EEKNEQEEDDR). The residue at position 67 (Leu67) is a Leucine amide.

The protein belongs to the frog skin active peptide (FSAP) family. Medusin subfamily. As to expression, expressed by the skin glands.

Its subcellular location is the secreted. Its function is as follows. Antimicrobial peptide active against Gram-positive bacteria and fungi but inactive against Gram-negative bacteria. Also inhibits growth of B.dendrobatidis zoospores at high concentrations. Shows anticancer activities. Shows hemolytic activity. The polypeptide is Medusin-AS (Agalychnis spurrelli (Gliding leaf frog)).